The chain runs to 71 residues: Small ribosomal subunit protein bS21 (71 aa).

The disordered stretch occupies residues 39–71; it reads EKPTQERKRKAAAAVKRQLRRSSRDVTKRQRLY. Residues 45–59 are compositionally biased toward basic residues; the sequence is RKRKAAAAVKRQLRR. A compositionally biased stretch (basic and acidic residues) spans 60–71; the sequence is SSRDVTKRQRLY.

The protein belongs to the bacterial ribosomal protein bS21 family.

This Stenotrophomonas maltophilia (strain K279a) protein is Small ribosomal subunit protein bS21.